The primary structure comprises 235 residues: UPF0758 protein Swol_1642 (235 aa).

Residues 109-235 (IIKSPEDVQE…YCSLKARGLI (127 aa)) enclose the MPN domain. Zn(2+) is bound by residues His-184, His-186, and Asp-197. A JAMM motif motif is present at residues 184 to 197 (HNHPSGDPTPSQED).

The protein belongs to the UPF0758 family.

The sequence is that of UPF0758 protein Swol_1642 from Syntrophomonas wolfei subsp. wolfei (strain DSM 2245B / Goettingen).